Reading from the N-terminus, the 466-residue chain is Asparagine--tRNA ligase (466 aa).

The protein belongs to the class-II aminoacyl-tRNA synthetase family. Homodimer.

The protein resides in the cytoplasm. The enzyme catalyses tRNA(Asn) + L-asparagine + ATP = L-asparaginyl-tRNA(Asn) + AMP + diphosphate + H(+). The sequence is that of Asparagine--tRNA ligase from Shewanella sp. (strain MR-4).